A 262-amino-acid chain; its full sequence is Acyl-[acyl-carrier-protein]--UDP-N-acetylglucosamine O-acyltransferase (262 aa).

The protein belongs to the transferase hexapeptide repeat family. LpxA subfamily. As to quaternary structure, homotrimer.

It localises to the cytoplasm. The catalysed reaction is a (3R)-hydroxyacyl-[ACP] + UDP-N-acetyl-alpha-D-glucosamine = a UDP-3-O-[(3R)-3-hydroxyacyl]-N-acetyl-alpha-D-glucosamine + holo-[ACP]. It functions in the pathway glycolipid biosynthesis; lipid IV(A) biosynthesis; lipid IV(A) from (3R)-3-hydroxytetradecanoyl-[acyl-carrier-protein] and UDP-N-acetyl-alpha-D-glucosamine: step 1/6. Functionally, involved in the biosynthesis of lipid A, a phosphorylated glycolipid that anchors the lipopolysaccharide to the outer membrane of the cell. The sequence is that of Acyl-[acyl-carrier-protein]--UDP-N-acetylglucosamine O-acyltransferase from Salmonella heidelberg (strain SL476).